The following is a 1058-amino-acid chain: Carbamoyl phosphate synthase large chain (1058 aa).

The carboxyphosphate synthetic domain stretch occupies residues 1-401; sequence MPKRKDIKTI…SLLKAIRSLE (401 aa). Arg-129, Arg-169, Gly-175, Gly-176, Lys-208, Ile-210, Glu-215, Gly-241, Ile-242, His-243, Gln-284, and Glu-298 together coordinate ATP. In terms of domain architecture, ATP-grasp 1 spans 133 to 327; it reads RDLMNELNEP…IAKIAAKIAV (195 aa). Residues Gln-284, Glu-298, and Asn-300 each contribute to the Mg(2+) site. Mn(2+) is bound by residues Gln-284, Glu-298, and Asn-300. The oligomerization domain stretch occupies residues 402-546; the sequence is YGVHHLGLPN…YSTYEFENES (145 aa). Residues 547-929 are carbamoyl phosphate synthetic domain; the sequence is TRSDKEKIVV…ALYKGLTAAG (383 aa). One can recognise an ATP-grasp 2 domain in the interval 671–861; sequence EKLLIGLKIP…VANIAMQCIL (191 aa). Residues Arg-707, Arg-746, Leu-748, Glu-752, Gly-777, Val-778, His-779, Ser-780, Gln-820, and Glu-832 each contribute to the ATP site. Mg(2+) is bound by residues Gln-820, Glu-832, and Asn-834. Gln-820, Glu-832, and Asn-834 together coordinate Mn(2+). The 129-residue stretch at 930-1058 folds into the MGS-like domain; it reads IKIKDYGRVL…ESMSFRVQTL (129 aa). The segment at 930 to 1058 is allosteric domain; it reads IKIKDYGRVL…ESMSFRVQTL (129 aa).

Belongs to the CarB family. Composed of two chains; the small (or glutamine) chain promotes the hydrolysis of glutamine to ammonia, which is used by the large (or ammonia) chain to synthesize carbamoyl phosphate. Tetramer of heterodimers (alpha,beta)4. It depends on Mg(2+) as a cofactor. Mn(2+) is required as a cofactor.

It catalyses the reaction hydrogencarbonate + L-glutamine + 2 ATP + H2O = carbamoyl phosphate + L-glutamate + 2 ADP + phosphate + 2 H(+). The catalysed reaction is hydrogencarbonate + NH4(+) + 2 ATP = carbamoyl phosphate + 2 ADP + phosphate + 2 H(+). The protein operates within amino-acid biosynthesis; L-arginine biosynthesis; carbamoyl phosphate from bicarbonate: step 1/1. Its pathway is pyrimidine metabolism; UMP biosynthesis via de novo pathway; (S)-dihydroorotate from bicarbonate: step 1/3. In terms of biological role, large subunit of the glutamine-dependent carbamoyl phosphate synthetase (CPSase). CPSase catalyzes the formation of carbamoyl phosphate from the ammonia moiety of glutamine, carbonate, and phosphate donated by ATP, constituting the first step of 2 biosynthetic pathways, one leading to arginine and/or urea and the other to pyrimidine nucleotides. The large subunit (synthetase) binds the substrates ammonia (free or transferred from glutamine from the small subunit), hydrogencarbonate and ATP and carries out an ATP-coupled ligase reaction, activating hydrogencarbonate by forming carboxy phosphate which reacts with ammonia to form carbamoyl phosphate. The protein is Carbamoyl phosphate synthase large chain of Fusobacterium nucleatum subsp. nucleatum (strain ATCC 25586 / DSM 15643 / BCRC 10681 / CIP 101130 / JCM 8532 / KCTC 2640 / LMG 13131 / VPI 4355).